Reading from the N-terminus, the 427-residue chain is MDKIIIRGGKRLSGAVPVSGAKNSALTLLPCALLTDEPVTLRNLPRLADIDGFQHLMNQFGVSTSIAGARPEDFGRVMTLQATRLTSTVAPYDLVRKMRASILVLGPMLARAGEATVSLPGGCAIGNRPIDLHLKALEALGAQIELAAGYVRAIAPDGGLPGGRYSFPVVSVGATENALMAAVLAKGKSTLHNAAREPEIVDLCNLLVAMGAQIEGIGTSDLTIHGVDRLHGATYMVMPDRIEAGSYACAAAITGGEVMLNGARIEDMEATVQALRDAGVHVEPRKGGIYVAADGPLKPVTISTAPYPGFATDMQAQLMAMLCLAHGSSVLTETIFENRYMHVPELNRMGARIETKGRTAVVHGVEKLTGAEVMATDLRASMSLVIAGLAAEGETQVHRLYHLDRGYERLEEKLSLLGAEIERVGGD.

22-23 (KN) lines the phosphoenolpyruvate pocket. Arg99 contacts UDP-N-acetyl-alpha-D-glucosamine. Cys123 functions as the Proton donor in the catalytic mechanism. Cys123 bears the 2-(S-cysteinyl)pyruvic acid O-phosphothioketal mark. UDP-N-acetyl-alpha-D-glucosamine contacts are provided by residues 128 to 132 (RPIDL), Asp313, and Ile335.

This sequence belongs to the EPSP synthase family. MurA subfamily.

Its subcellular location is the cytoplasm. It carries out the reaction phosphoenolpyruvate + UDP-N-acetyl-alpha-D-glucosamine = UDP-N-acetyl-3-O-(1-carboxyvinyl)-alpha-D-glucosamine + phosphate. It participates in cell wall biogenesis; peptidoglycan biosynthesis. In terms of biological role, cell wall formation. Adds enolpyruvyl to UDP-N-acetylglucosamine. The polypeptide is UDP-N-acetylglucosamine 1-carboxyvinyltransferase (Novosphingobium aromaticivorans (strain ATCC 700278 / DSM 12444 / CCUG 56034 / CIP 105152 / NBRC 16084 / F199)).